The following is an 842-amino-acid chain: Probable cleavage and polyadenylation specificity factor subunit 2 (842 aa).

Over residues 414 to 425 (AEETRIRMERAR) the composition is skewed to basic and acidic residues. Disordered stretches follow at residues 414–442 (AEET…DDIA) and 708–747 (METF…SIPI). Residues 432–441 (ESDDSDDDDI) show a composition bias toward acidic residues. The segment covering 731–747 (SNGQSKENDENASSIPI) has biased composition (polar residues).

It belongs to the metallo-beta-lactamase superfamily. RNA-metabolizing metallo-beta-lactamase-like family. CPSF2/YSH1 subfamily. CPSF is a heterotetramer composed of four distinct subunits 160, 100, 70 and 30 kDa.

Its subcellular location is the nucleus. CPSF plays a key role in pre-mRNA 3'-end formation, recognizing the AAUAAA signal sequence and interacting with poly(A)polymerase and other factors to bring about cleavage and poly(A) addition. This chain is Probable cleavage and polyadenylation specificity factor subunit 2, found in Caenorhabditis briggsae.